The following is a 276-amino-acid chain: Eukaryotic translation initiation factor 3 subunit G (276 aa).

Phosphoserine is present on Ser148. The region spanning 195 to 274 is the RRM domain; that stretch reads TTLKISQLNS…LILHLEWSKK (80 aa).

Belongs to the eIF-3 subunit G family. In terms of assembly, component of the eukaryotic translation initiation factor 3 (eIF-3) complex.

Its subcellular location is the cytoplasm. RNA-binding component of the eukaryotic translation initiation factor 3 (eIF-3) complex, which is involved in protein synthesis of a specialized repertoire of mRNAs and, together with other initiation factors, stimulates binding of mRNA and methionyl-tRNAi to the 40S ribosome. The eIF-3 complex specifically targets and initiates translation of a subset of mRNAs involved in cell proliferation. This subunit can bind 18S rRNA. The chain is Eukaryotic translation initiation factor 3 subunit G from Debaryomyces hansenii (strain ATCC 36239 / CBS 767 / BCRC 21394 / JCM 1990 / NBRC 0083 / IGC 2968) (Yeast).